Reading from the N-terminus, the 25-residue chain is Neuromedin-U-25 (25 aa).

N25 carries the asparagine amide modification.

The protein belongs to the NmU family.

It is found in the secreted. In terms of biological role, stimulates uterine smooth muscle contraction and causes selective vasoconstriction. The protein is Neuromedin-U-25 of Rana temporaria (European common frog).